We begin with the raw amino-acid sequence, 313 residues long: ADP-L-glycero-D-manno-heptose-6-epimerase (313 aa).

NADP(+) is bound by residues 10-11 (MI), 31-32 (DN), Lys38, Lys53, 75-79 (EGACS), and Asn92. Catalysis depends on Tyr139, which acts as the Proton acceptor. Lys143 serves as a coordination point for NADP(+). Asn174 lines the substrate pocket. Residues Val175 and Lys183 each contribute to the NADP(+) site. The active-site Proton acceptor is the Lys183. Substrate-binding positions include Ser185, His192, 206–209 (FEGS), Arg214, and Tyr277.

Belongs to the NAD(P)-dependent epimerase/dehydratase family. HldD subfamily. As to quaternary structure, homopentamer. It depends on NADP(+) as a cofactor.

It carries out the reaction ADP-D-glycero-beta-D-manno-heptose = ADP-L-glycero-beta-D-manno-heptose. Its pathway is nucleotide-sugar biosynthesis; ADP-L-glycero-beta-D-manno-heptose biosynthesis; ADP-L-glycero-beta-D-manno-heptose from D-glycero-beta-D-manno-heptose 7-phosphate: step 4/4. Functionally, catalyzes the interconversion between ADP-D-glycero-beta-D-manno-heptose and ADP-L-glycero-beta-D-manno-heptose via an epimerization at carbon 6 of the heptose. In Aliivibrio fischeri (strain MJ11) (Vibrio fischeri), this protein is ADP-L-glycero-D-manno-heptose-6-epimerase.